The sequence spans 413 residues: MALIVQKFGGTSVGSVERIEQVADKVKKFRDAGDDLVVVLSAMSGETNRLIDLAKAISGDQQPLPRELDVIVSTGEQVTIALLAMALNKRGVPAVSYTGSQVRILTDSAHTKARILQIDDQKIRTDLKAGRVVVVAGFQGVDEQGNITTLGRGGSDTTGVALAAALKADECQIYTDVDGVYTTDPRVVSVAQRLDKITFEEMLEMASLGSKVLQIRAVEFAGKYNVPLRVLHSFKEGPGTLITIDEEESMEQPIISGIAFNRDEAKLTIRGVPDTPGVAFKILGPISGANIEVDMIVQNVSHDNTTDFTFTVHRNEYDAAERILQNTAKEIGAREVVGDTKIAKVSIVGVGMRSHAGVASRMFEALAKESINIQMISTSEIKVSVVIEEKYLELAVRALHTAFELDAPARQGE.

ACT domains follow at residues 267–341 (LTIR…GDTK) and 347–413 (IVGV…RQGE).

This sequence belongs to the aspartokinase family. In terms of assembly, homotrimer. In the presence of inhibitory amino acids the Stokes radius of the protein increases, suggesting its oligomeric state may change.

It localises to the cytoplasm. It carries out the reaction L-aspartate + ATP = 4-phospho-L-aspartate + ADP. The protein operates within amino-acid biosynthesis; L-lysine biosynthesis via DAP pathway; (S)-tetrahydrodipicolinate from L-aspartate: step 1/4. It participates in amino-acid biosynthesis; L-methionine biosynthesis via de novo pathway; L-homoserine from L-aspartate: step 1/3. It functions in the pathway amino-acid biosynthesis; L-threonine biosynthesis; L-threonine from L-aspartate: step 1/5. Its activity is regulated as follows. Activated by L-lysine, L-methionine, and L-isoleucine. L-threonine, at low concentrations, is a mild activator and has a weak inhibitory effect only at concentrations over 10 mM. Strongly feedback inhibited by the concerted combination of L-lysine and L-threonine and slightly feedback inhibited by the concerted combination of L-threonine and L-methionine. Activated by the combination of L-methionine and L-lysine, L-methionine and L-isoleucine and L-lysine and L-isoleucine. In terms of biological role, involved in the biosynthesis of L-aspartate-beta-semialdehyde which is a central intermediate in the biosynthesis of different amino acids (L-lysine, L-methionine, L-threonine). Catalyzes the phosphorylation of the beta-carboxyl group of L-aspartate to yield 4-phospho-L-aspartate. In Pseudomonas fluorescens (strain SBW25), this protein is Aspartate kinase.